We begin with the raw amino-acid sequence, 447 residues long: Argininosuccinate synthase (447 aa).

ATP-binding positions include 20-28 (AFSGGLDTS) and Ala-46. Residue Tyr-102 participates in L-citrulline binding. Gly-132 and Thr-134 together coordinate ATP. Positions 134, 138, and 139 each coordinate L-aspartate. Asn-138 serves as a coordination point for L-citrulline. Asp-139 contacts ATP. L-citrulline contacts are provided by Arg-142 and Ser-195. An ATP-binding site is contributed by Asp-197. The L-citrulline site is built by Thr-204, Glu-206, and Glu-283.

This sequence belongs to the argininosuccinate synthase family. Type 2 subfamily. In terms of assembly, homotetramer.

It is found in the cytoplasm. The catalysed reaction is L-citrulline + L-aspartate + ATP = 2-(N(omega)-L-arginino)succinate + AMP + diphosphate + H(+). It functions in the pathway amino-acid biosynthesis; L-arginine biosynthesis; L-arginine from L-ornithine and carbamoyl phosphate: step 2/3. The protein is Argininosuccinate synthase (argG) of Neisseria meningitidis serogroup B (strain ATCC BAA-335 / MC58).